The following is a 445-amino-acid chain: Phosphatidate cytidylyltransferase 2 (445 aa).

Positions 1 to 39 (MTELRQRVAREPEAPPEDKESESEAKADGETASDSESRV) are enriched in basic and acidic residues. The segment at 1 to 52 (MTELRQRVAREPEAPPEDKESESEAKADGETASDSESRVEAVTQPPSADDTP) is disordered. The residue at position 21 (serine 21) is a Phosphoserine. Phosphothreonine is present on threonine 31. A phosphoserine mark is found at serine 33, serine 35, and serine 37. Threonine 51 carries the post-translational modification Phosphothreonine. The next 6 helical transmembrane spans lie at 79-99 (MIAF…MIVM), 132-152 (FLLC…FFTL), 166-186 (HRFI…LSLV), 213-233 (LVIH…SCVI), 262-282 (GFIG…YVMS), and 340-360 (IALS…ASGF).

Belongs to the CDS family. Homodimer.

The protein localises to the endoplasmic reticulum membrane. It carries out the reaction a 1,2-diacyl-sn-glycero-3-phosphate + CTP + H(+) = a CDP-1,2-diacyl-sn-glycerol + diphosphate. The enzyme catalyses 1-octadecanoyl-2-(5Z,8Z,11Z,14Z-eicosatetraenoyl)-sn-glycero-3-phosphate + CTP + H(+) = 1-octadecanoyl-2-(5Z,8Z,11Z,14Z-eicosatetraenoyl)-sn-glycero-3-cytidine-5'-diphosphate + diphosphate. It catalyses the reaction 1-octadecanoyl-2-(9Z,12Z-octadecadienoyl)-sn-glycero-3-phosphate + CTP + H(+) = 1-octadecanoyl-2-(9Z,12Z-octadecadienoyl)-sn-glycero-3-cytidine-5'-diphosphate + diphosphate. The catalysed reaction is 1-hexadecanoyl-2-(5Z,8Z,11Z,14Z-eicosatetraenoyl)-sn-glycero-3-phosphate + CTP + H(+) = 1-hexadecanoyl-2-(5Z,8Z,11Z,14Z-eicosatetraenoyl)-sn-glycero-3-cytidine-5'-diphosphate + diphosphate. It carries out the reaction 1,2-di-(5Z,8Z,11Z,14Z)-eicosatetraenoyl-sn-glycero-3-phosphate + CTP + H(+) = 1,2-di-(5Z,8Z,11Z,14Z-eicosatetraenoyl)-sn-glycero-3-cytidine-5'-diphosphate + diphosphate. The enzyme catalyses 1-octadecanoyl-2-(9Z-octadecenoyl)-sn-glycero-3-phosphate + CTP + H(+) = 1-octadecanoyl-2-(9Z-octadecenoyl)-sn-glycero-3-cytidine-5'-diphosphate + diphosphate. It catalyses the reaction 1-octadecanoyl-2-(4Z,7Z,10Z,13Z,16Z,19Z-docosahexaenoyl)-sn-glycero-3-phosphate + CTP + H(+) = 1-octadecanoyl-2-(4Z,7Z,10Z,13Z,16Z,19Z-docosahexaenoyl)-sn-glycero-3-cytidine-5'-diphosphate + diphosphate. The catalysed reaction is 1,2-di-(9Z,12Z-octadecadienoyl)-sn-glycero-3-phosphate + CTP + H(+) = 1,2-di-(9Z,12Z-octadecadienoyl)-sn-glycero-3-cytidine-5'-diphosphate + diphosphate. It carries out the reaction 1,2-di-(9Z-octadecenoyl)-sn-glycero-3-phosphate + CTP + H(+) = 1,2-di-(9Z-octadecenoyl)-sn-glycero-3-cytidine-5'-diphosphate + diphosphate. It participates in phospholipid metabolism; CDP-diacylglycerol biosynthesis; CDP-diacylglycerol from sn-glycerol 3-phosphate: step 3/3. Functionally, catalyzes the conversion of phosphatidic acid (PA) to CDP-diacylglycerol (CDP-DAG), an essential intermediate in the synthesis of phosphatidylglycerol, cardiolipin and phosphatidylinositol. Exhibits specificity for the nature of the acyl chains at the sn-1 and sn-2 positions in the substrate, PA and the preferred acyl chain composition is 1-stearoyl-2-arachidonoyl-sn-phosphatidic acid. Plays an important role in regulating the growth and maturation of lipid droplets which are storage organelles at the center of lipid and energy homeostasis. The chain is Phosphatidate cytidylyltransferase 2 (CDS2) from Bos taurus (Bovine).